A 413-amino-acid polypeptide reads, in one-letter code: Serine hydroxymethyltransferase (413 aa).

Residues Leu-117 and 121 to 123 (GHL) each bind (6S)-5,6,7,8-tetrahydrofolate. Lys-226 carries the post-translational modification N6-(pyridoxal phosphate)lysine. Position 349 to 351 (349 to 351 (SPF)) interacts with (6S)-5,6,7,8-tetrahydrofolate.

The protein belongs to the SHMT family. Homodimer. The cofactor is pyridoxal 5'-phosphate.

The protein localises to the cytoplasm. It carries out the reaction (6R)-5,10-methylene-5,6,7,8-tetrahydrofolate + glycine + H2O = (6S)-5,6,7,8-tetrahydrofolate + L-serine. Its pathway is one-carbon metabolism; tetrahydrofolate interconversion. The protein operates within amino-acid biosynthesis; glycine biosynthesis; glycine from L-serine: step 1/1. Functionally, catalyzes the reversible interconversion of serine and glycine with tetrahydrofolate (THF) serving as the one-carbon carrier. This reaction serves as the major source of one-carbon groups required for the biosynthesis of purines, thymidylate, methionine, and other important biomolecules. Also exhibits THF-independent aldolase activity toward beta-hydroxyamino acids, producing glycine and aldehydes, via a retro-aldol mechanism. In Pelobacter propionicus (strain DSM 2379 / NBRC 103807 / OttBd1), this protein is Serine hydroxymethyltransferase.